The chain runs to 58 residues: Large ribosomal subunit protein bL32c (58 aa).

A compositionally biased stretch (basic residues) spans 1–19 (MAVPKKRKSKMKTRLRKAQ). The disordered stretch occupies residues 1 to 25 (MAVPKKRKSKMKTRLRKAQWKSEAS).

This sequence belongs to the bacterial ribosomal protein bL32 family.

Its subcellular location is the plastid. It is found in the chloroplast. This is Large ribosomal subunit protein bL32c (rpl32) from Chlorella vulgaris (Green alga).